Here is a 334-residue protein sequence, read N- to C-terminus: Holliday junction branch migration complex subunit RuvB (334 aa).

Residues Met-1–Tyr-182 form a large ATPase domain (RuvB-L) region. ATP contacts are provided by residues Leu-21, Arg-22, Gly-63, Lys-66, Thr-67, Thr-68, Glu-129–Phe-131, Arg-172, Tyr-182, and Arg-219. Residue Thr-67 participates in Mg(2+) binding. Residues Glu-183–Gln-253 form a small ATPAse domain (RuvB-S) region. Residues Lys-256 to Asp-334 form a head domain (RuvB-H) region. Residues Arg-311 and Arg-316 each coordinate DNA.

The protein belongs to the RuvB family. As to quaternary structure, homohexamer. Forms an RuvA(8)-RuvB(12)-Holliday junction (HJ) complex. HJ DNA is sandwiched between 2 RuvA tetramers; dsDNA enters through RuvA and exits via RuvB. An RuvB hexamer assembles on each DNA strand where it exits the tetramer. Each RuvB hexamer is contacted by two RuvA subunits (via domain III) on 2 adjacent RuvB subunits; this complex drives branch migration. In the full resolvosome a probable DNA-RuvA(4)-RuvB(12)-RuvC(2) complex forms which resolves the HJ.

The protein localises to the cytoplasm. It carries out the reaction ATP + H2O = ADP + phosphate + H(+). The RuvA-RuvB-RuvC complex processes Holliday junction (HJ) DNA during genetic recombination and DNA repair, while the RuvA-RuvB complex plays an important role in the rescue of blocked DNA replication forks via replication fork reversal (RFR). RuvA specifically binds to HJ cruciform DNA, conferring on it an open structure. The RuvB hexamer acts as an ATP-dependent pump, pulling dsDNA into and through the RuvAB complex. RuvB forms 2 homohexamers on either side of HJ DNA bound by 1 or 2 RuvA tetramers; 4 subunits per hexamer contact DNA at a time. Coordinated motions by a converter formed by DNA-disengaged RuvB subunits stimulates ATP hydrolysis and nucleotide exchange. Immobilization of the converter enables RuvB to convert the ATP-contained energy into a lever motion, pulling 2 nucleotides of DNA out of the RuvA tetramer per ATP hydrolyzed, thus driving DNA branch migration. The RuvB motors rotate together with the DNA substrate, which together with the progressing nucleotide cycle form the mechanistic basis for DNA recombination by continuous HJ branch migration. Branch migration allows RuvC to scan DNA until it finds its consensus sequence, where it cleaves and resolves cruciform DNA. This Bacillus pumilus (strain SAFR-032) protein is Holliday junction branch migration complex subunit RuvB.